The chain runs to 502 residues: Mannitol 2-dehydrogenase (502 aa).

37–48 (IVHIGVGGFHRA) is an NAD(+) binding site.

The protein belongs to the mannitol dehydrogenase family. Monomer.

It catalyses the reaction D-mannitol + NAD(+) = D-fructose + NADH + H(+). Catalyzes the NAD(H)-dependent interconversion of D-fructose and D-mannitol in the mannitol metabolic pathway. The sequence is that of Mannitol 2-dehydrogenase from Aspergillus fumigatus (strain CBS 144.89 / FGSC A1163 / CEA10) (Neosartorya fumigata).